The primary structure comprises 486 residues: Transcriptional adapter 2-beta (486 aa).

The ZZ-type zinc-finger motif lies at 4-59 (LGKKYCVNCLADVTNLRIRCAECQDIELCPECFSAGAEIGNHRRWHGYQQVDGGRF). 8 residues coordinate Zn(2+): cysteine 9, cysteine 12, cysteine 23, cysteine 26, cysteine 32, cysteine 35, histidine 45, and histidine 49. The 54-residue stretch at 65 to 118 (EAEGGWTSREEQSLLDAIEQYGFGNWEDMAAHVGASRTPQEVMDHYVSMYIHGN) folds into the SANT domain. 2 disordered regions span residues 237–291 (KKDK…EKGQ) and 343–377 (EYEA…TAGL). 2 stretches are compositionally biased toward gly residues: residues 247-262 (GTVG…GSGS) and 367-377 (SSGGGGGTAGL).

The protein localises to the nucleus. In terms of biological role, transcriptional coactivator. The polypeptide is Transcriptional adapter 2-beta (tada2b) (Danio rerio (Zebrafish)).